The following is a 242-amino-acid chain: Murein peptide amidase A (242 aa).

A Peptidase M14 domain is found at M1–H234. Residues H49, E52, and H157 each contribute to the Zn(2+) site. Catalysis depends on E210, which acts as the Proton donor/acceptor.

The protein belongs to the peptidase M14 family. As to quaternary structure, homodimer. Zn(2+) is required as a cofactor.

The protein localises to the cytoplasm. The enzyme catalyses L-alanyl-gamma-D-glutamyl-meso-2,6-diaminopimelate + H2O = L-alanyl-D-glutamate + meso-2,6-diaminopimelate. It functions in the pathway cell wall degradation; peptidoglycan degradation. In terms of biological role, involved in muropeptide degradation. Catalyzes the hydrolysis of the gamma-D-glutamyl-diaminopimelic acid (gamma-D-Glu-Dap) amide bond in the murein tripeptide L-alanyl-gamma-D-glutamyl-meso-diaminopimelic acid, leading to the formation of L-Ala-gamma-D-Glu and Dap. This Escherichia coli O157:H7 protein is Murein peptide amidase A.